The sequence spans 297 residues: Tryptophan 2,3-dioxygenase (297 aa).

Substrate is bound by residues 51-55 (FIIQH), tyrosine 113, and arginine 117. Histidine 240 serves as a coordination point for heme. Residue threonine 254 participates in substrate binding.

Belongs to the tryptophan 2,3-dioxygenase family. As to quaternary structure, homotetramer. Requires heme as cofactor.

The enzyme catalyses L-tryptophan + O2 = N-formyl-L-kynurenine. The protein operates within amino-acid degradation; L-tryptophan degradation via kynurenine pathway; L-kynurenine from L-tryptophan: step 1/2. Heme-dependent dioxygenase that catalyzes the oxidative cleavage of the L-tryptophan (L-Trp) pyrrole ring and converts L-tryptophan to N-formyl-L-kynurenine. Catalyzes the oxidative cleavage of the indole moiety. The polypeptide is Tryptophan 2,3-dioxygenase (Xanthomonas oryzae pv. oryzae (strain MAFF 311018)).